We begin with the raw amino-acid sequence, 64 residues long: Lectin-A (64 aa).

2 consecutive Chitin-binding type-1 domains span residues 1–20 (APECGREAHCGDDCQSQVVT) and 22–45 (DFDDRTCPKLLCCSKDGWCGNTDA).

In terms of processing, glycosylated.

In terms of biological role, N-acetyl-D-glucosamine binding lectin. Shows low hemagglutinating activity towards human erythrocytes. Has low mitogenic activity towards human peripheral blood lymphocytes. This chain is Lectin-A, found in Phytolacca americana (American pokeweed).